The chain runs to 342 residues: Elongation factor Ts (342 aa).

The segment at 80-83 is involved in Mg(2+) ion dislocation from EF-Tu; the sequence is TDFV.

This sequence belongs to the EF-Ts family.

Its subcellular location is the cytoplasm. Associates with the EF-Tu.GDP complex and induces the exchange of GDP to GTP. It remains bound to the aminoacyl-tRNA.EF-Tu.GTP complex up to the GTP hydrolysis stage on the ribosome. This chain is Elongation factor Ts, found in Lactobacillus delbrueckii subsp. bulgaricus (strain ATCC 11842 / DSM 20081 / BCRC 10696 / JCM 1002 / NBRC 13953 / NCIMB 11778 / NCTC 12712 / WDCM 00102 / Lb 14).